Reading from the N-terminus, the 466-residue chain is Adenosylhomocysteinase (466 aa).

Thr-57, Asp-132, and Glu-192 together coordinate substrate. 193-195 (TTT) contacts NAD(+). Positions 222 and 226 each coordinate substrate. NAD(+) is bound by residues Asn-227, 256–261 (GYGDVG), Glu-279, Asn-314, 335–337 (IGH), and Asn-380.

The protein belongs to the adenosylhomocysteinase family. NAD(+) is required as a cofactor.

The protein resides in the cytoplasm. The catalysed reaction is S-adenosyl-L-homocysteine + H2O = L-homocysteine + adenosine. It participates in amino-acid biosynthesis; L-homocysteine biosynthesis; L-homocysteine from S-adenosyl-L-homocysteine: step 1/1. Functionally, may play a key role in the regulation of the intracellular concentration of adenosylhomocysteine. The chain is Adenosylhomocysteinase from Rhizobium leguminosarum bv. trifolii (strain WSM2304).